The sequence spans 260 residues: uncharacterized protein (260 aa).

The N-terminal stretch at 1 to 22 is a signal peptide; sequence MGYIKRIGLYISIFILIVMVAG. Residue Cys23 is the site of N-palmitoyl cysteine attachment. A lipid anchor (S-diacylglycerol cysteine) is attached at Cys23.

The protein belongs to the staphylococcal tandem lipoprotein family.

The protein resides in the cell membrane. This is an uncharacterized protein from Staphylococcus aureus (strain bovine RF122 / ET3-1).